A 135-amino-acid polypeptide reads, in one-letter code: MVKFLKPNKAVILLQGRYAGKKAVIVKTFDDGTREKPYGHCLVAGIKKFPSKVIKKDSAKKTAKKSRVKAFVKLVNYQHLMPTRYTLDVDLKDAVVPDVLQSKDKKVTALKETKKSLEERFKTGKNRWFFTKLRF.

It belongs to the eukaryotic ribosomal protein eL27 family.

This is Large ribosomal subunit protein eL27 (RPL27) from Pisum sativum (Garden pea).